The following is a 451-amino-acid chain: Vacuolar cation/proton exchanger 1a (451 aa).

Residues 1–58 (MEAAAAMEAGRKLAARHPHGRSRTAHNMSSSSLRKKSDAALVRKVPVAPLRPLLANLQ) are Cytoplasmic-facing. A disordered region spans residues 9–37 (AGRKLAARHPHGRSRTAHNMSSSSLRKKS). A compositionally biased stretch (basic residues) spans 13–24 (LAARHPHGRSRT). Residues 59 to 79 (EVFLATKLAVLFPAVPLAIAA) form a helical membrane-spanning segment. At 80–86 (QCFRFDQ) the chain is on the vacuolar side. Residues 87–107 (VWVFALSLLGLIPLAERVSFL) traverse the membrane as a helical segment. The Cytoplasmic portion of the chain corresponds to 108–120 (TEQIALYTGPTVG). Residues 121 to 141 (GLLNATCGNATELIIALFALL) form a helical membrane-spanning segment. Residues 128–163 (GNATELIIALFALLKGKIEVVKCSLLGSVLSNLLLV) form a cation selection region. Residues 142-153 (KGKIEVVKCSLL) lie on the Vacuolar side of the membrane. Residues 154–174 (GSVLSNLLLVLGTSLFCGGVV) traverse the membrane as a helical segment. Over 175-191 (NLGARQPYDRNQSDVST) the chain is Cytoplasmic. A helical membrane pass occupies residues 192-212 (ALLFLAVLCHSAPLLLRYAVA). Topologically, residues 213-228 (AGEHSVSATSAAASLD) are vacuolar. The helical transmembrane segment at 229-249 (LSRACSFVMLASYVAYLFFQL) threads the bilayer. The Cytoplasmic segment spans residues 250–273 (KTHRQLFEPQEVDGGDAGDDDEEP). Residues 274–294 (ALGFASALFWLALMTAVISVL) traverse the membrane as a helical segment. Over 295–317 (SEYVVGTIEPTSQSWGLSVSFIS) the chain is Vacuolar. The helical transmembrane segment at 318 to 338 (IILLPIVGNAAEHAGAIIFAL) threads the bilayer. The tract at residues 325-360 (GNAAEHAGAIIFALKNKLDITLGVALGSATQISMFV) is cation selection. Residues 339–352 (KNKLDITLGVALGS) lie on the Cytoplasmic side of the membrane. Residues 353–373 (ATQISMFVVPLSVLVAWIMGV) traverse the membrane as a helical segment. At 374-378 (QMDLD) the chain is on the vacuolar side. A helical membrane pass occupies residues 379–399 (FKLLETGSLFMAVLVTAFTLQ). At 400–404 (DGTSH) the chain is on the cytoplasmic side. The chain crosses the membrane as a helical span at residues 405–425 (YLKGILLLLCYIVIGACFFVA). At 426–451 (RQPAGHANSNGALLDVPTGSMSVQAA) the chain is on the vacuolar side.

Belongs to the Ca(2+):cation antiporter (CaCA) (TC 2.A.19) family. Cation/proton exchanger (CAX) subfamily. Ubiquitous.

It localises to the vacuole membrane. Functionally, vacuolar cation/proton exchanger (CAX). Translocates Ca(2+) and other metal ions into vacuoles using the proton gradient formed by H(+)-ATPase and H(+)-pyrophosphatase. The chain is Vacuolar cation/proton exchanger 1a (CAX1a) from Oryza sativa subsp. japonica (Rice).